Consider the following 189-residue polypeptide: GMP synthase [glutamine-hydrolyzing] subunit A (189 aa).

The Glutamine amidotransferase type-1 domain maps to 1–189; that stretch reads MIVILNNGGQ…CKKCGFGFEE (189 aa). The Nucleophile role is filled by cysteine 76. Catalysis depends on residues histidine 163 and glutamate 165.

As to quaternary structure, heterodimer composed of a glutamine amidotransferase subunit (A) and a GMP-binding subunit (B).

It carries out the reaction XMP + L-glutamine + ATP + H2O = GMP + L-glutamate + AMP + diphosphate + 2 H(+). The protein operates within purine metabolism; GMP biosynthesis; GMP from XMP (L-Gln route): step 1/1. In terms of biological role, catalyzes the synthesis of GMP from XMP. This chain is GMP synthase [glutamine-hydrolyzing] subunit A, found in Methanococcus maripaludis (strain DSM 14266 / JCM 13030 / NBRC 101832 / S2 / LL).